A 383-amino-acid polypeptide reads, in one-letter code: Putative glutamate--cysteine ligase 2-1 (383 aa).

Belongs to the glutamate--cysteine ligase type 2 family. YbdK subfamily.

The enzyme catalyses L-cysteine + L-glutamate + ATP = gamma-L-glutamyl-L-cysteine + ADP + phosphate + H(+). ATP-dependent carboxylate-amine ligase which exhibits weak glutamate--cysteine ligase activity. This is Putative glutamate--cysteine ligase 2-1 from Arthrobacter sp. (strain FB24).